The following is a 545-amino-acid chain: ATP synthase subunit alpha (545 aa).

Position 174-181 (174-181) interacts with ATP; sequence GDRKTGKT.

This sequence belongs to the ATPase alpha/beta chains family. As to quaternary structure, F-type ATPases have 2 components, CF(1) - the catalytic core - and CF(0) - the membrane proton channel. CF(1) has five subunits: alpha(3), beta(3), gamma(1), delta(1), epsilon(1). CF(0) has three main subunits: a(1), b(2) and c(9-12). The alpha and beta chains form an alternating ring which encloses part of the gamma chain. CF(1) is attached to CF(0) by a central stalk formed by the gamma and epsilon chains, while a peripheral stalk is formed by the delta and b chains.

The protein localises to the cell membrane. The enzyme catalyses ATP + H2O + 4 H(+)(in) = ADP + phosphate + 5 H(+)(out). Produces ATP from ADP in the presence of a proton gradient across the membrane. The alpha chain is a regulatory subunit. In Cutibacterium acnes (strain DSM 16379 / KPA171202) (Propionibacterium acnes), this protein is ATP synthase subunit alpha.